A 311-amino-acid chain; its full sequence is Porphobilinogen deaminase (311 aa).

Residue Cys243 is modified to S-(dipyrrolylmethanemethyl)cysteine.

It belongs to the HMBS family. As to quaternary structure, monomer. Dipyrromethane is required as a cofactor.

The catalysed reaction is 4 porphobilinogen + H2O = hydroxymethylbilane + 4 NH4(+). Its pathway is porphyrin-containing compound metabolism; protoporphyrin-IX biosynthesis; coproporphyrinogen-III from 5-aminolevulinate: step 2/4. In terms of biological role, tetrapolymerization of the monopyrrole PBG into the hydroxymethylbilane pre-uroporphyrinogen in several discrete steps. The sequence is that of Porphobilinogen deaminase from Blochmanniella floridana.